The sequence spans 1469 residues: Accumulation-associated protein (1469 aa).

A signal peptide spans 1-52 (MGKRRQGPINKKVDFLPNKLNKYSIRKFTVGTASILLGSTLIFGSSSHEAKA). Disordered regions lie at residues 52–164 (AAEE…SEPV), 486–511 (GIETTTTPTYVNPNTGEKVGEGTPTT), and 528–1443 (EIKP…QANE). 2 stretches are compositionally biased toward polar residues: residues 75–94 (ENTNQPTVNNEAPQMSSTLQ) and 110–125 (KANSDNDTQTQFSEAP). Residues 129–144 (DLARKEDIPAVSKNEE) are compositionally biased toward basic and acidic residues. Over residues 145–164 (LQSSQPNTDSKIEPTTSEPV) the composition is skewed to polar residues. 7 G5 domains span residues 446–528 (PKAV…GGEE), 574–656 (YGPV…GGEE), 702–784 (YGPV…GGEE), 830–912 (YGPV…GGEE), 958–1040 (YGPV…GGEE), 1086–1168 (YGPV…GGEQ), and 1211–1296 (VTKY…GPTK). Residues 489 to 500 (TTTTPTYVNPNT) show a composition bias toward low complexity. Basic and acidic residues-rich tracts occupy residues 528-537 (EIKPGHKDEF) and 589-613 (PFDKKREFNPDLKPGEERVKQKGEP). Over residues 614 to 629 (GTKTITTPTTKNPLTG) the composition is skewed to low complexity. Composition is skewed to basic and acidic residues over residues 631 to 646 (KVGEGEPTEKITKQPV) and 655 to 665 (EEIKPGHKDEF). Low complexity predominate over residues 738 to 757 (KGEPGTKTITTPTTKNPLTG). Basic and acidic residues-rich tracts occupy residues 759 to 793 (KVGEGEPTEKITKQPVDEIVHYGGEEIKPGHKDEF) and 845 to 869 (PFDKKREFNPDLKPGEERVKQKGEP). Residues 870–885 (GTKTITTPTTKNPLTG) are compositionally biased toward low complexity. A compositionally biased stretch (basic and acidic residues) spans 887-921 (KVGEGEPTEKVTKQPVDEIVHYGGEEIKPGHKDEF). A compositionally biased stretch (low complexity) spans 994–1013 (KGEPGTKTITTPTTKNPLTG). Residues 1015-1049 (KVGEGEPTEKITKQPVDEIVHYGGEEIKPGHKDEF) are compositionally biased toward basic and acidic residues. A compositionally biased stretch (low complexity) spans 1122–1141 (KGEPGTKTITTPTTKNPLTG). Basic and acidic residues-rich tracts occupy residues 1143-1162 (KVGEGEPTEKITKQPVDEIV), 1229-1253 (PFDKKRVFNPDLKPGEERVKQKGEP), and 1271-1286 (KVGEGKSTEKVTKQPV). Polar residues predominate over residues 1409–1443 (TPTQSGAPEQPNRSMHSTDNKNQLPDTGENRQANE). An LPXTG sorting signal motif is present at residues 1432–1436 (LPDTG). Thr-1435 carries the pentaglycyl murein peptidoglycan amidated threonine modification. A propeptide spans 1436 to 1469 (GENRQANEGTLVGSLLAIVGSLFIFGRRKKGNEK) (removed by sortase).

The protein resides in the secreted. It localises to the cell wall. In Staphylococcus epidermidis (strain ATCC 12228 / FDA PCI 1200), this protein is Accumulation-associated protein.